The sequence spans 512 residues: Glutathione-binding protein GsiB (512 aa).

An N-terminal signal peptide occupies residues 1–26; that stretch reads MARAVHRSGLVALGIATALMASCAFA.

The protein belongs to the bacterial solute-binding protein 5 family. In terms of assembly, the complex is composed of two ATP-binding proteins (GsiA), two transmembrane proteins (GsiC and GsiD) and a solute-binding protein (GsiB).

Its subcellular location is the periplasm. In terms of biological role, part of the ABC transporter complex GsiABCD involved in glutathione import. Binds glutathione. The chain is Glutathione-binding protein GsiB from Shigella boydii serotype 4 (strain Sb227).